We begin with the raw amino-acid sequence, 256 residues long: MRHSPRKRFGQNFLQDKYIINEILRAINPLADDNMLEIGPGLGALTQPLLQKLNRLTAIEIDTDLQSYLTCLPVSQGKLNLIPADALTVDFCQFGPHLRVVGNLPYNISTPLLIYLLKFITCIDDMHFMLQKEVVERIAAAHGTKAYGRLSVMLQYHCEVEYLFDVPPEAFEPRPKVDSAIVRLTPHRVSPFESVNTEKLENIVAKAFAMRRKTLTNNLKGIISLSQLNDLGIDGGKRPEQISVAEYVQLAKFISN.

6 residues coordinate S-adenosyl-L-methionine: N12, L14, G39, E60, D85, and N103.

The protein belongs to the class I-like SAM-binding methyltransferase superfamily. rRNA adenine N(6)-methyltransferase family. RsmA subfamily.

The protein resides in the cytoplasm. It catalyses the reaction adenosine(1518)/adenosine(1519) in 16S rRNA + 4 S-adenosyl-L-methionine = N(6)-dimethyladenosine(1518)/N(6)-dimethyladenosine(1519) in 16S rRNA + 4 S-adenosyl-L-homocysteine + 4 H(+). Specifically dimethylates two adjacent adenosines (A1518 and A1519) in the loop of a conserved hairpin near the 3'-end of 16S rRNA in the 30S particle. May play a critical role in biogenesis of 30S subunits. This chain is Ribosomal RNA small subunit methyltransferase A, found in Legionella pneumophila (strain Lens).